The following is a 226-amino-acid chain: Uridylate kinase (226 aa).

Lys6–Lys10 contacts ATP. Gly43 contributes to the UMP binding site. ATP is bound by residues Gly44 and Arg48. Residues Asp65 and Phe113–Thr119 contribute to the UMP site. ATP is bound by residues Thr139, Asn140, Tyr145, and Asp148.

It belongs to the UMP kinase family. As to quaternary structure, homohexamer.

Its subcellular location is the cytoplasm. It carries out the reaction UMP + ATP = UDP + ADP. Its pathway is pyrimidine metabolism; CTP biosynthesis via de novo pathway; UDP from UMP (UMPK route): step 1/1. Its activity is regulated as follows. Inhibited by UTP. Catalyzes the reversible phosphorylation of UMP to UDP. This Sulfurisphaera tokodaii (strain DSM 16993 / JCM 10545 / NBRC 100140 / 7) (Sulfolobus tokodaii) protein is Uridylate kinase.